Here is a 111-residue protein sequence, read N- to C-terminus: Large ribosomal subunit protein uL24 (111 aa).

This sequence belongs to the universal ribosomal protein uL24 family. As to quaternary structure, part of the 50S ribosomal subunit.

One of two assembly initiator proteins, it binds directly to the 5'-end of the 23S rRNA, where it nucleates assembly of the 50S subunit. In terms of biological role, one of the proteins that surrounds the polypeptide exit tunnel on the outside of the subunit. The polypeptide is Large ribosomal subunit protein uL24 (Chlamydia muridarum (strain MoPn / Nigg)).